A 140-amino-acid chain; its full sequence is Nucleoside diphosphate kinase (140 aa).

6 residues coordinate ATP: lysine 9, phenylalanine 57, arginine 85, threonine 91, arginine 102, and asparagine 112. Catalysis depends on histidine 115, which acts as the Pros-phosphohistidine intermediate.

This sequence belongs to the NDK family. Homotetramer. Requires Mg(2+) as cofactor.

It is found in the cytoplasm. It carries out the reaction a 2'-deoxyribonucleoside 5'-diphosphate + ATP = a 2'-deoxyribonucleoside 5'-triphosphate + ADP. The enzyme catalyses a ribonucleoside 5'-diphosphate + ATP = a ribonucleoside 5'-triphosphate + ADP. In terms of biological role, major role in the synthesis of nucleoside triphosphates other than ATP. The ATP gamma phosphate is transferred to the NDP beta phosphate via a ping-pong mechanism, using a phosphorylated active-site intermediate. The protein is Nucleoside diphosphate kinase of Chlorobium chlorochromatii (strain CaD3).